Here is a 247-residue protein sequence, read N- to C-terminus: MNIYPAIDLKDGQAVRLLRGDMDQATVFNPDPAAQAAAFQDQGFRWLHLVDLNGAFAGRPVNADAVSRILERVTIPVQLGGGIRDMATIEEWLGRGIRRVILGTVALRDPDLVKDACRAFPGRICVGIDARDGHVAVEGWATTSDVRALDLALRFEDAGVAAIVYTDINRDGAMGGVNVEATADLAVHLTTPVIASGGVHALSDLLALKAEAETGIEGVIVGRALYDGRIDPRQALALTAGPEDARC.

Asp-8 serves as the catalytic Proton acceptor. Residue Asp-129 is the Proton donor of the active site.

It belongs to the HisA/HisF family.

The protein resides in the cytoplasm. The enzyme catalyses 1-(5-phospho-beta-D-ribosyl)-5-[(5-phospho-beta-D-ribosylamino)methylideneamino]imidazole-4-carboxamide = 5-[(5-phospho-1-deoxy-D-ribulos-1-ylimino)methylamino]-1-(5-phospho-beta-D-ribosyl)imidazole-4-carboxamide. Its pathway is amino-acid biosynthesis; L-histidine biosynthesis; L-histidine from 5-phospho-alpha-D-ribose 1-diphosphate: step 4/9. This is 1-(5-phosphoribosyl)-5-[(5-phosphoribosylamino)methylideneamino] imidazole-4-carboxamide isomerase from Rhodospirillum centenum (strain ATCC 51521 / SW).